A 595-amino-acid chain; its full sequence is Leiomodin-1 (595 aa).

Disordered stretches follow at residues 1–69 (MSKV…EAML), 81–322 (QREM…KVKN), and 467–568 (DKQR…QEKN). Phosphoserine is present on Ser12. The segment covering 27–40 (EEMEELEKELDVVD) has biased composition (acidic residues). Composition is skewed to basic and acidic residues over residues 81 to 110 (QREMSVDESKQVGRKTDAKNGEEKDSDASR), 117 to 127 (QDSDLGKEPKK), 134 to 192 (FSRD…EKTG), 200 to 223 (SRDKDKKKEEVKEPSKKEEVKLTA), 230 to 249 (GRREDGRLKESSKENKKPED), 257 to 287 (RDWRKEDEKVKKEENQPDKEVREESKTKAPE), 467 to 476 (DKQRQKRLQE), and 484 to 493 (SGEKKDRLEV). Ser85 carries the phosphoserine modification. At Ser135 the chain carries Phosphoserine. 8 consecutive repeat copies span residues 165-179 (AAVDRKESGKDGREE), 180-195 (RAAAARKEEEKTGSVK), 196-211 (NAGLSRDKDKKKEEVK), 212-226 (EPSKKEEVKLTAESR), 227-240 (NTVGRREDGRLKES), 242-255 (KENKKPEDEGIGSG), 256-271 (GRDWRKEDEKVKKEEN), and 272-288 (QPDKEVREESKTKAPEK). Residues 165–288 (AAVDRKESGK…EESKTKAPEK (124 aa)) form an 8 X approximate tandem repeats region. Positions 503-522 (SPKPSPQPSPKPAPKNSPKK) are 5 X 4 AA approximate tandem repeats. 2 stretches are compositionally biased toward pro residues: residues 505-517 (KPSPQPSPKPAPK) and 527-538 (AAPPPPPPPLAP). The residue at position 550 (Ser550) is a Phosphoserine. The region spanning 569–588 (SRDQLLAAIRSSNLKQLKKV) is the WH2 domain.

It belongs to the tropomodulin family. As to expression, detected in aorta, urinary bladder and uterus (at protein level). Detected in smooth muscle cells. Detected in aorta, bladder, colon, intestine, stomach and uterus.

The protein localises to the cytoplasm. It is found in the myofibril. It localises to the sarcomere. The protein resides in the cytoskeleton. Functionally, required for proper contractility of visceral smooth muscle cells. Mediates nucleation of actin filaments. The protein is Leiomodin-1 (Lmod1) of Mus musculus (Mouse).